The following is a 67-amino-acid chain: Large ribosomal subunit protein bL35 (67 aa).

Belongs to the bacterial ribosomal protein bL35 family.

This is Large ribosomal subunit protein bL35 from Gloeothece citriformis (strain PCC 7424) (Cyanothece sp. (strain PCC 7424)).